We begin with the raw amino-acid sequence, 733 residues long: Neutral ceramidase 3 (733 aa).

A signal peptide spans 1–25 (MTRWSMSMHCTLFLLFLLRLTCIFS). Catalysis depends on Ser307, which acts as the Nucleophile. The N-linked (GlcNAc...) asparagine glycan is linked to Asn325.

This sequence belongs to the neutral ceramidase family.

The protein resides in the secreted. It localises to the endoplasmic reticulum. Its subcellular location is the golgi apparatus. The enzyme catalyses an N-acylsphing-4-enine + H2O = sphing-4-enine + a fatty acid. Functionally, hydrolyzes the sphingolipid ceramide into sphingosine and free fatty acid. Promotes oxidative stress resistance. This is Neutral ceramidase 3 from Arabidopsis thaliana (Mouse-ear cress).